The following is a 366-amino-acid chain: UDP-N-acetylglucosamine--N-acetylmuramyl-(pentapeptide) pyrophosphoryl-undecaprenol N-acetylglucosamine transferase (366 aa).

UDP-N-acetyl-alpha-D-glucosamine contacts are provided by residues 14–16, N125, R168, S196, and Q297; that span reads TGG.

It belongs to the glycosyltransferase 28 family. MurG subfamily.

The protein resides in the cell inner membrane. The catalysed reaction is di-trans,octa-cis-undecaprenyl diphospho-N-acetyl-alpha-D-muramoyl-L-alanyl-D-glutamyl-meso-2,6-diaminopimeloyl-D-alanyl-D-alanine + UDP-N-acetyl-alpha-D-glucosamine = di-trans,octa-cis-undecaprenyl diphospho-[N-acetyl-alpha-D-glucosaminyl-(1-&gt;4)]-N-acetyl-alpha-D-muramoyl-L-alanyl-D-glutamyl-meso-2,6-diaminopimeloyl-D-alanyl-D-alanine + UDP + H(+). It participates in cell wall biogenesis; peptidoglycan biosynthesis. Cell wall formation. Catalyzes the transfer of a GlcNAc subunit on undecaprenyl-pyrophosphoryl-MurNAc-pentapeptide (lipid intermediate I) to form undecaprenyl-pyrophosphoryl-MurNAc-(pentapeptide)GlcNAc (lipid intermediate II). The chain is UDP-N-acetylglucosamine--N-acetylmuramyl-(pentapeptide) pyrophosphoryl-undecaprenol N-acetylglucosamine transferase from Rhodopseudomonas palustris (strain HaA2).